Reading from the N-terminus, the 175-residue chain is CASP-like protein 2C1 (175 aa).

At 1-7 (MVKLRET) the chain is on the cytoplasmic side. The helical transmembrane segment at 8-28 (EVILRLCIVFFLLLTSCLIGL) threads the bilayer. Over 29-45 (DSQTKEIAYIHKNVSFR) the chain is Extracellular. Asn-41 carries an N-linked (GlcNAc...) asparagine glycan. Residues 46-66 (YLLALEAELYIDVVVAAYNLV) traverse the membrane as a helical segment. Residues 67–91 (QLGLGWYNVEQKTSNPKWFSYLLDQ) are Cytoplasmic-facing. The chain crosses the membrane as a helical span at residues 92 to 112 (TAAYVVFAGTSAAAQHSLLVV). The Extracellular segment spans residues 113-136 (TGSRELQWMKWCYKFTRFCFQMGS). Residues 137–157 (AIILNYIAAALMVLLSSISAF) form a helical membrane-spanning segment. At 158-175 (NLFRLYSPKRFFRFKSSS) the chain is on the cytoplasmic side.

Belongs to the Casparian strip membrane proteins (CASP) family. In terms of assembly, homodimer and heterodimers.

It is found in the cell membrane. This Arabidopsis thaliana (Mouse-ear cress) protein is CASP-like protein 2C1.